A 434-amino-acid polypeptide reads, in one-letter code: Glutamate-1-semialdehyde 2,1-aminomutase 1 (434 aa).

Lys270 is modified (N6-(pyridoxal phosphate)lysine).

It belongs to the class-III pyridoxal-phosphate-dependent aminotransferase family. HemL subfamily. Homodimer. The cofactor is pyridoxal 5'-phosphate.

It localises to the cytoplasm. It carries out the reaction (S)-4-amino-5-oxopentanoate = 5-aminolevulinate. Its pathway is porphyrin-containing compound metabolism; protoporphyrin-IX biosynthesis; 5-aminolevulinate from L-glutamyl-tRNA(Glu): step 2/2. This Bacillus thuringiensis subsp. konkukian (strain 97-27) protein is Glutamate-1-semialdehyde 2,1-aminomutase 1.